The primary structure comprises 225 residues: Cytidylate kinase (225 aa).

10-18 is a binding site for ATP; it reads GPASSGKST.

The protein belongs to the cytidylate kinase family. Type 1 subfamily.

It is found in the cytoplasm. It carries out the reaction CMP + ATP = CDP + ADP. It catalyses the reaction dCMP + ATP = dCDP + ADP. The sequence is that of Cytidylate kinase from Streptococcus suis (strain 98HAH33).